Reading from the N-terminus, the 633-residue chain is DNA-directed RNA polymerase subunit gamma (633 aa).

Residues cysteine 74, cysteine 76, cysteine 89, and cysteine 92 each coordinate Zn(2+). Mg(2+) contacts are provided by aspartate 471, aspartate 473, and aspartate 475.

The protein belongs to the RNA polymerase beta' chain family. RpoC1 subfamily. In cyanobacteria the RNAP catalytic core is composed of 2 alpha, 1 beta, 1 beta', 1 gamma and 1 omega subunit. When a sigma factor is associated with the core the holoenzyme is formed, which can initiate transcription. Requires Mg(2+) as cofactor. The cofactor is Zn(2+).

The catalysed reaction is RNA(n) + a ribonucleoside 5'-triphosphate = RNA(n+1) + diphosphate. DNA-dependent RNA polymerase catalyzes the transcription of DNA into RNA using the four ribonucleoside triphosphates as substrates. This is DNA-directed RNA polymerase subunit gamma from Prochlorococcus marinus (strain MIT 9211).